The following is a 323-amino-acid chain: Galectin-4 (323 aa).

Galectin domains are found at residues Tyr-19 to Ile-150 and Tyr-194 to Ile-323. Position 256–262 (Trp-256–Lys-262) interacts with a beta-D-galactoside.

Monomer.

In terms of biological role, galectin that binds lactose and a related range of sugars. May be involved in the assembly of adherens junctions. This is Galectin-4 (LGALS4) from Sus scrofa (Pig).